Consider the following 206-residue polypeptide: Thymidylate kinase (206 aa).

Residue 10–17 coordinates ATP; it reads GIDGAGKS.

This sequence belongs to the thymidylate kinase family.

It catalyses the reaction dTMP + ATP = dTDP + ADP. In terms of biological role, phosphorylation of dTMP to form dTDP in both de novo and salvage pathways of dTTP synthesis. This chain is Thymidylate kinase, found in Neisseria gonorrhoeae (strain ATCC 700825 / FA 1090).